A 394-amino-acid chain; its full sequence is 8-amino-7-oxononanoate synthase (394 aa).

Arg21 is a substrate binding site. 112–113 (GY) contacts pyridoxal 5'-phosphate. His137 contacts substrate. Positions 183, 211, and 239 each coordinate pyridoxal 5'-phosphate. Lys242 is modified (N6-(pyridoxal phosphate)lysine). Thr358 lines the substrate pocket.

It belongs to the class-II pyridoxal-phosphate-dependent aminotransferase family. BioF subfamily. As to quaternary structure, homodimer. Requires pyridoxal 5'-phosphate as cofactor.

It catalyses the reaction 6-carboxyhexanoyl-[ACP] + L-alanine + H(+) = (8S)-8-amino-7-oxononanoate + holo-[ACP] + CO2. Its pathway is cofactor biosynthesis; biotin biosynthesis. In terms of biological role, catalyzes the decarboxylative condensation of pimeloyl-[acyl-carrier protein] and L-alanine to produce 8-amino-7-oxononanoate (AON), [acyl-carrier protein], and carbon dioxide. This chain is 8-amino-7-oxononanoate synthase, found in Paraburkholderia xenovorans (strain LB400).